We begin with the raw amino-acid sequence, 701 residues long: ABC transporter G family member 23 (701 aa).

One can recognise an ABC transporter domain in the interval isoleucine 7–tyrosine 237. Glycine 39–threonine 46 serves as a coordination point for ATP. Helical transmembrane passes span phenylalanine 335–isoleucine 355, phenylalanine 493–isoleucine 513, histidine 541–valine 561, leucine 574–isoleucine 596, leucine 608–isoleucine 628, and leucine 665–isoleucine 685. The region spanning phenylalanine 459–glycine 686 is the ABC transmembrane type-2 domain.

It belongs to the ABC transporter superfamily. ABCG family.

It localises to the membrane. This chain is ABC transporter G family member 23 (abcG23), found in Dictyostelium discoideum (Social amoeba).